The sequence spans 194 residues: Large ribosomal subunit protein eL15 (194 aa).

Basic residues predominate over residues 162 to 173 (KTSAGRRARGLH). The disordered stretch occupies residues 162 to 194 (KTSAGRRARGLHNRGTGTEKCRPSLTSHKNQGK). Residues 185–194 (SLTSHKNQGK) show a composition bias toward polar residues.

It belongs to the eukaryotic ribosomal protein eL15 family.

In Methanocorpusculum labreanum (strain ATCC 43576 / DSM 4855 / Z), this protein is Large ribosomal subunit protein eL15.